Reading from the N-terminus, the 328-residue chain is Ribosomal RNA small subunit methyltransferase H (328 aa).

S-adenosyl-L-methionine is bound by residues 64 to 66 (GGH), Asp-83, Phe-112, Asp-129, and Gln-136.

The protein belongs to the methyltransferase superfamily. RsmH family.

The protein resides in the cytoplasm. It catalyses the reaction cytidine(1402) in 16S rRNA + S-adenosyl-L-methionine = N(4)-methylcytidine(1402) in 16S rRNA + S-adenosyl-L-homocysteine + H(+). In terms of biological role, specifically methylates the N4 position of cytidine in position 1402 (C1402) of 16S rRNA. The polypeptide is Ribosomal RNA small subunit methyltransferase H (Bdellovibrio bacteriovorus (strain ATCC 15356 / DSM 50701 / NCIMB 9529 / HD100)).